The primary structure comprises 389 residues: Large envelope protein (389 aa).

An N-acetylmethionine modification is found at Met-1. A lipid anchor (N-myristoyl glycine; by host) is attached at Gly-2. Residues 2–108 are pre-S1; that stretch reads GTNLSVPNPL…PPLRDTHPQA (107 aa). Positions 2 to 163 are pre-S; sequence GTNLSVPNPL…LSTTGDPVPN (162 aa). The Virion surface; in external conformation portion of the chain corresponds to 2–170; it reads GTNLSVPNPL…VPNMENIASG (169 aa). At 2-242 the chain is on the intravirion; in internal conformation side; it reads GTNLSVPNPL…PGYRWMCLRR (241 aa). The interval 109 to 163 is pre-S2; the sequence is MQWNSTTFHQTLQDPRVRALYFPAGGSSSGTVNPVQNTASSISSILSTTGDPVPN. Residues 171 to 191 traverse the membrane as a helical segment; that stretch reads LLGPLLVLQAGFFSLTKILTI. At 192 to 242 the chain is on the intravirion; in external conformation side; that stretch reads PLSLDSWWTSLNFLGETPVCLGQNSQSQISSHSPTCCPPICPGYRWMCLRR. Residues 243-263 form a helical membrane-spanning segment; that stretch reads FIIFLCILLLCLIFLLVLLDY. The Virion surface segment spans residues 264 to 337; that stretch reads QGMLPVCPLI…WASVRFSWLS (74 aa). The N-linked (GlcNAc...) asparagine; by host glycan is linked to Asn-309. Residues 338 to 358 traverse the membrane as a helical segment; that stretch reads LLVPFVQWFVGLSPTVWLSVI. The Intravirion segment spans residues 359–364; the sequence is WMMWFW. A helical membrane pass occupies residues 365–387; that stretch reads GPSLYNILSPFMPLLPIFFCLWV. Residues 388 to 389 are Virion surface-facing; the sequence is YI.

The protein belongs to the orthohepadnavirus major surface antigen family. As to quaternary structure, interacts (via its myristoylated pre-S1 region) with the host SLC10A1/NTCP; this interaction is essential for viral entry. In terms of assembly, in its internal form (Li-HBsAg), interacts with the capsid protein and with the isoform S. Interacts with host chaperone CANX. Associates with host chaperone CANX through its pre-S2 N glycan; this association may be essential for isoform M proper secretion. As to quaternary structure, interacts with isoform L. Interacts with the antigens of satellite virus HDV (HDVAgs); this interaction is required for encapsidation of HDV genomic RNA. Post-translationally, isoform M is N-terminally acetylated by host at a ratio of 90%, and N-glycosylated by host at the pre-S2 region. In terms of processing, myristoylated; this modification is essential for its interaction with the host protein SLC10A1/NTCP.

The protein localises to the virion membrane. In terms of biological role, the large envelope protein exists in two topological conformations, one which is termed 'external' or Le-HBsAg and the other 'internal' or Li-HBsAg. In its external conformation the protein attaches the virus to cell receptors and thereby initiating infection. This interaction determines the species specificity and liver tropism. This attachment induces virion internalization predominantly through caveolin-mediated endocytosis. The large envelope protein also assures fusion between virion membrane and endosomal membrane. In its internal conformation the protein plays a role in virion morphogenesis and mediates the contact with the nucleocapsid like a matrix protein. Its function is as follows. The middle envelope protein plays an important role in the budding of the virion. It is involved in the induction of budding in a nucleocapsid independent way. In this process the majority of envelope proteins bud to form subviral lipoprotein particles of 22 nm of diameter that do not contain a nucleocapsid. The chain is Large envelope protein from Hepatitis B virus genotype B2 (isolate Indonesia/pIDW420/1988) (HBV-B).